A 60-amino-acid polypeptide reads, in one-letter code: Potassium channel toxin alpha-KTx 3.6 (60 aa).

An N-terminal signal peptide occupies residues 1-22 (MKVFFAVLITLFICSMIIGIHG). 3 disulfide bridges follow: Cys29/Cys49, Cys35/Cys54, and Cys39/Cys56. Lys59 carries the post-translational modification Lysine amide.

The protein belongs to the short scorpion toxin superfamily. Potassium channel inhibitor family. Alpha-KTx 03 subfamily. In terms of tissue distribution, expressed by the venom gland.

Its subcellular location is the secreted. Its function is as follows. Blocks voltage-gated potassium channels. At 2 uM, blocks rat Kv1.1/KCNA1 and Kv1.3/KCNA3, has a strong effect on rat Kv1.2/KCNA2 and Kv1.6/KCNA6 as well as a moderate effect on Shaker IR. This Olivierus martensii (Manchurian scorpion) protein is Potassium channel toxin alpha-KTx 3.6.